The chain runs to 92 residues: Large ribosomal subunit protein eL43 (92 aa).

The Zn(2+) site is built by Cys39, Cys42, Cys57, and Cys60. The C4-type zinc finger occupies 39 to 60; that stretch reads CSFCGKTKMKRKAVGIWHCGSC.

It belongs to the eukaryotic ribosomal protein eL43 family. Component of the large ribosomal subunit.

The protein localises to the cytoplasm. In terms of biological role, component of the large ribosomal subunit. The ribosome is a large ribonucleoprotein complex responsible for the synthesis of proteins in the cell. The chain is Large ribosomal subunit protein eL43 (RPL37A) from Gallus gallus (Chicken).